Consider the following 268-residue polypeptide: Kynurenine formamidase (268 aa).

An HGGXW motif is present at residues 33 to 37; the sequence is HGGGW. S107 acts as the Nucleophile in catalysis. Residues D219 and H251 contribute to the active site.

Belongs to the kynurenine formamidase family. As to quaternary structure, homodimer.

It catalyses the reaction N-formyl-L-kynurenine + H2O = L-kynurenine + formate + H(+). The protein operates within amino-acid degradation; L-tryptophan degradation via kynurenine pathway; L-kynurenine from L-tryptophan: step 2/2. Its function is as follows. Catalyzes the hydrolysis of N-formyl-L-kynurenine to L-kynurenine, the second step in the kynurenine pathway of tryptophan degradation. Kynurenine may be further oxidized to nicotinic acid, NAD(H) and NADP(H). Required for elimination of toxic metabolites. The protein is Kynurenine formamidase of Scheffersomyces stipitis (strain ATCC 58785 / CBS 6054 / NBRC 10063 / NRRL Y-11545) (Yeast).